The sequence spans 125 residues: Acyl carrier protein, mitochondrial (125 aa).

The transit peptide at 1–36 directs the protein to the mitochondrion; that stretch reads MFRSVCRISSRVAPSAYRTIMGRSVMSNTILAQRFY. The region spanning 43–122 is the Carrier domain; sequence DQVSQRVIDV…ETVDYIASNP (80 aa). At Ser82 the chain carries O-(pantetheine 4'-phosphoryl)serine.

The protein belongs to the acyl carrier protein (ACP) family. Complex I is composed of about 30 different subunits. In terms of processing, 4'-phosphopantetheine is transferred from CoA to a specific serine of apo-ACP by acpS. This modification is essential for activity because fatty acids are bound in thioester linkage to the sulfhydryl of the prosthetic group.

The protein localises to the mitochondrion. It participates in lipid metabolism; fatty acid biosynthesis. Its function is as follows. Carrier of the growing fatty acid chain in fatty acid biosynthesis. May be involved in the synthesis of very-long-chain fatty acids. Accessory and non-catalytic subunit of the mitochondrial membrane respiratory chain NADH dehydrogenase (Complex I), which functions in the transfer of electrons from NADH to the respiratory chain. In Saccharomyces cerevisiae (strain ATCC 204508 / S288c) (Baker's yeast), this protein is Acyl carrier protein, mitochondrial (ACP1).